The chain runs to 379 residues: Fructose-1,6-bisphosphate aldolase/phosphatase (379 aa).

The active-site Proton acceptor; for FBP phosphatase activity is the aspartate 13. Mg(2+)-binding residues include aspartate 13, histidine 20, aspartate 51, and aspartate 52. A beta-D-fructose 1,6-bisphosphate-binding site is contributed by histidine 20. A dihydroxyacetone phosphate-binding site is contributed by histidine 20. Tyrosine 89 is a beta-D-fructose 1,6-bisphosphate binding site. Glutamine 93 provides a ligand contact to Mg(2+). 102–103 (GN) is a beta-D-fructose 1,6-bisphosphate binding site. Aspartate 130 is a binding site for Mg(2+). Beta-D-fructose 1,6-bisphosphate is bound at residue lysine 131. Lysine 131 contributes to the dihydroxyacetone phosphate binding site. Catalysis depends on tyrosine 227, which acts as the Proton donor/acceptor; for FBP aldolase activity. Mg(2+) contacts are provided by lysine 230, aspartate 231, and aspartate 232. Lysine 230 (schiff-base intermediate with DHAP; for FBP aldolase activity) is an active-site residue. Beta-D-fructose 1,6-bisphosphate is bound by residues 240–241 (QS), arginine 264, aspartate 285, and tyrosine 346. Dihydroxyacetone phosphate-binding residues include arginine 264 and aspartate 285.

It belongs to the FBP aldolase/phosphatase family. In terms of assembly, homooctamer; dimer of tetramers. It depends on Mg(2+) as a cofactor.

It catalyses the reaction beta-D-fructose 1,6-bisphosphate + H2O = beta-D-fructose 6-phosphate + phosphate. The catalysed reaction is beta-D-fructose 1,6-bisphosphate = D-glyceraldehyde 3-phosphate + dihydroxyacetone phosphate. The protein operates within carbohydrate biosynthesis; gluconeogenesis. Functionally, catalyzes two subsequent steps in gluconeogenesis: the aldol condensation of dihydroxyacetone phosphate (DHAP) and glyceraldehyde-3-phosphate (GA3P) to fructose-1,6-bisphosphate (FBP), and the dephosphorylation of FBP to fructose-6-phosphate (F6P). In Moorella thermoacetica (strain ATCC 39073 / JCM 9320), this protein is Fructose-1,6-bisphosphate aldolase/phosphatase.